Here is a 155-residue protein sequence, read N- to C-terminus: 6,7-dimethyl-8-ribityllumazine synthase (155 aa).

5-amino-6-(D-ribitylamino)uracil contacts are provided by residues F22, 56–58 (AFE), and 80–82 (AVI). 85-86 (NT) lines the (2S)-2-hydroxy-3-oxobutyl phosphate pocket. H88 functions as the Proton donor in the catalytic mechanism. Position 113 (F113) interacts with 5-amino-6-(D-ribitylamino)uracil. R127 provides a ligand contact to (2S)-2-hydroxy-3-oxobutyl phosphate.

It belongs to the DMRL synthase family.

The catalysed reaction is (2S)-2-hydroxy-3-oxobutyl phosphate + 5-amino-6-(D-ribitylamino)uracil = 6,7-dimethyl-8-(1-D-ribityl)lumazine + phosphate + 2 H2O + H(+). The protein operates within cofactor biosynthesis; riboflavin biosynthesis; riboflavin from 2-hydroxy-3-oxobutyl phosphate and 5-amino-6-(D-ribitylamino)uracil: step 1/2. Its function is as follows. Catalyzes the formation of 6,7-dimethyl-8-ribityllumazine by condensation of 5-amino-6-(D-ribitylamino)uracil with 3,4-dihydroxy-2-butanone 4-phosphate. This is the penultimate step in the biosynthesis of riboflavin. In Streptococcus pneumoniae serotype 2 (strain D39 / NCTC 7466), this protein is 6,7-dimethyl-8-ribityllumazine synthase.